Here is a 602-residue protein sequence, read N- to C-terminus: Threonine--tRNA ligase (602 aa).

The segment at 208–499 is catalytic; that stretch reads DHRKLGTELK…LTEHCAGEFP (292 aa). Zn(2+) contacts are provided by C300, H351, and H476.

It belongs to the class-II aminoacyl-tRNA synthetase family. In terms of assembly, homodimer. Requires Zn(2+) as cofactor.

It localises to the cytoplasm. It catalyses the reaction tRNA(Thr) + L-threonine + ATP = L-threonyl-tRNA(Thr) + AMP + diphosphate + H(+). In terms of biological role, catalyzes the attachment of threonine to tRNA(Thr) in a two-step reaction: L-threonine is first activated by ATP to form Thr-AMP and then transferred to the acceptor end of tRNA(Thr). Also edits incorrectly charged L-seryl-tRNA(Thr). This is Threonine--tRNA ligase from Campylobacter jejuni subsp. jejuni serotype O:2 (strain ATCC 700819 / NCTC 11168).